The chain runs to 89 residues: Large ribosomal subunit protein uL23c (89 aa).

The protein belongs to the universal ribosomal protein uL23 family. As to quaternary structure, part of the 50S ribosomal subunit.

It is found in the plastid. The protein localises to the chloroplast. In terms of biological role, binds to 23S rRNA. The sequence is that of Large ribosomal subunit protein uL23c (rpl23) from Staurastrum punctulatum (Green alga).